The following is a 462-amino-acid chain: MVDKIQSRWPTLMNQVSFDERYVNYKDRDADTVLARRLSACNLGFVYTKNFSAKTKRMLTSATRSICATSTGNNIDFGIFAAMLRNCDKVGVNSKSLTNLQPVGGAIFEEMFNFSQRNDFFIRPTIPFVGKVRAITQSLTPSMVIMPRVNDDRFGPSGIATFNAVLSGIMPVNEPERGLYLPTDLTYNIERITRSVMHKYTDETTNMPVFMAIGPYNEMLCGNNLGNKYLPRNTAFNASSVLQGRKVGDKIAYDQKLCCCFWIGTHNETEYSVLTELQKICIRNGRASVIPDEMKEIAVIKIGVVPSNKSACASFDSKTLRIENFVFQPDHTWELTQYTDRRVFSAANVDTSDFKDVEGDVNSIFDYGYMEMAGTEDKILEEEEEETMDETPEDILRTSNLQFAQPIGNNKSSPMKREFTAMEEDKTETGDIFKLLSQQKPAKGAKSKSKKYKKTEEDLSAV.

The tract at residues glutamine 405–valine 462 is disordered. Residues methionine 415–aspartate 431 show a composition bias toward basic and acidic residues. Over residues lysine 443 to lysine 453 the composition is skewed to basic residues.

This is an uncharacterized protein from Magallana gigas (Pacific oyster).